Reading from the N-terminus, the 186-residue chain is Putative adenylate kinase (186 aa).

ATP contacts are provided by Gly-10, Gly-12, Lys-13, Thr-14, and Ser-15. The tract at residues 30–53 (HLNELIKEEHLYTEVDEKRDSVVA) is NMP. The LID stretch occupies residues 108-118 (KRGYSEEKVNE). Arg-109 serves as a coordination point for ATP.

This sequence belongs to the adenylate kinase family. AK6 subfamily. Interacts with uS11. Not a structural component of 40S pre-ribosomes, but transiently interacts with them by binding to uS11.

It carries out the reaction AMP + ATP = 2 ADP. The enzyme catalyses ATP + H2O = ADP + phosphate + H(+). Functionally, broad-specificity nucleoside monophosphate (NMP) kinase that catalyzes the reversible transfer of the terminal phosphate group between nucleoside triphosphates and monophosphates. Also has ATPase activity. Involved in the late maturation steps of the 30S ribosomal particles, specifically 16S rRNA maturation. While NMP activity is not required for ribosome maturation, ATPase activity is. Associates transiently with small ribosomal subunit protein uS11. ATP hydrolysis breaks the interaction with uS11. May temporarily remove uS11 from the ribosome to enable a conformational change of the ribosomal RNA that is needed for the final maturation step of the small ribosomal subunit. This chain is Putative adenylate kinase, found in Methanosarcina acetivorans (strain ATCC 35395 / DSM 2834 / JCM 12185 / C2A).